The sequence spans 144 residues: FK506-binding protein 2 (144 aa).

The signal sequence occupies residues 1–20 (MARIIVLIVAFMALIAGVFA). In terms of domain architecture, PPIase FKBP-type spans 48 to 136 (GDTVSVHYTG…IFTTELVSID (89 aa)). The Prevents secretion from ER signature appears at 141–144 (RDEL).

It belongs to the FKBP-type PPIase family. FKBP2 subfamily.

It is found in the endoplasmic reticulum. The enzyme catalyses [protein]-peptidylproline (omega=180) = [protein]-peptidylproline (omega=0). Inhibited by both FK506 and rapamycin. Functionally, PPIases accelerate the folding of proteins. It catalyzes the cis-trans isomerization of proline imidic peptide bonds in oligopeptides. The polypeptide is FK506-binding protein 2 (FPR2) (Yarrowia lipolytica (strain CLIB 122 / E 150) (Yeast)).